The chain runs to 293 residues: MIYVNGRYMEEKDAVLSPFDHGFLYGIGVFETFRLYEGCPFLLDWHIERLERALKDLQIEYTVSKHEILEMLDKLLKLNDIKDGNARVRLNISAGISDKGFVAQTYDKPTVLCFVNQLKPESLPLQKEGKVLSIRRNTPEGSFRLKSHHYLNNMYAKREIGNDPRVEGIFLTEDGAVAEGIISNVFWRKGRCIYTPSLDTGILDGVTRRFIIENAKDIGLELKTGRYELEALLTADEAWMTNSVLEIIPFTKIEEVNYGSQSGEATSALQLLYKKEIKNMIHEKGGRAWRSTQ.

Residue Lys146 is modified to N6-(pyridoxal phosphate)lysine.

It belongs to the class-IV pyridoxal-phosphate-dependent aminotransferase family. Homodimer. Pyridoxal 5'-phosphate is required as a cofactor.

The enzyme catalyses 4-amino-4-deoxychorismate = 4-aminobenzoate + pyruvate + H(+). It participates in cofactor biosynthesis; tetrahydrofolate biosynthesis; 4-aminobenzoate from chorismate: step 2/2. Its function is as follows. Involved in the biosynthesis of p-aminobenzoate (PABA), a precursor of tetrahydrofolate. Converts 4-amino-4-deoxychorismate into 4-aminobenzoate (PABA) and pyruvate. In Bacillus subtilis (strain 168), this protein is Aminodeoxychorismate lyase.